We begin with the raw amino-acid sequence, 49 residues long: Large ribosomal subunit protein bL36 (49 aa).

It belongs to the bacterial ribosomal protein bL36 family.

This is Large ribosomal subunit protein bL36 from Pseudomonas fluorescens (strain ATCC BAA-477 / NRRL B-23932 / Pf-5).